A 93-amino-acid chain; its full sequence is MNIDNLVQNITPELFERLQYGAATGKWPDGTPLSDEQKQQTVQLVMLYQAKVAQSNEQFTIGANGEMVQKTKAQLQKEFNSDNEIARFSEHDL.

It to E.coli YeaC.

This is an uncharacterized protein from Pseudoalteromonas haloplanktis (Alteromonas haloplanktis).